We begin with the raw amino-acid sequence, 123 residues long: uncharacterized protein (123 aa).

The disordered stretch occupies residues 89-123; the sequence is GVGGRKLGSEGQSLSENSEQRSLMRWGCGGSSERR. Residues 98–109 show a composition bias toward polar residues; sequence EGQSLSENSEQR.

This is an uncharacterized protein from Encephalitozoon cuniculi (strain GB-M1) (Microsporidian parasite).